Here is a 454-residue protein sequence, read N- to C-terminus: F-box/WD repeat-containing protein 2 (454 aa).

Residues 54 to 101 enclose the F-box domain; that stretch reads RDFLKLLPLELSFYLLKWLDPQTLLTCCLVSKQWNKVISACTEVWQTA. WD repeat units follow at residues 146–183, 185–221, 224–265, and 276–314; these read GHSA…CVYG, QTHT…RTQH, GHTG…NTLT, and LQQC…NCKC. An N6-acetyllysine modification is found at Lys298.

In terms of assembly, directly interacts with SKP1 and CUL1.

In terms of biological role, substrate-recognition component of the SCF (SKP1-CUL1-F-box protein)-type E3 ubiquitin ligase complex. In Rattus norvegicus (Rat), this protein is F-box/WD repeat-containing protein 2.